The primary structure comprises 427 residues: Enolase (427 aa).

Gln163 contacts (2R)-2-phosphoglycerate. Glu205 acts as the Proton donor in catalysis. Mg(2+)-binding residues include Asp242, Glu285, and Asp312. The (2R)-2-phosphoglycerate site is built by Lys337, Arg366, Ser367, and Lys388. The active-site Proton acceptor is Lys337.

Belongs to the enolase family. It depends on Mg(2+) as a cofactor.

It is found in the cytoplasm. The protein resides in the secreted. Its subcellular location is the cell surface. The enzyme catalyses (2R)-2-phosphoglycerate = phosphoenolpyruvate + H2O. It functions in the pathway carbohydrate degradation; glycolysis; pyruvate from D-glyceraldehyde 3-phosphate: step 4/5. Its function is as follows. Catalyzes the reversible conversion of 2-phosphoglycerate (2-PG) into phosphoenolpyruvate (PEP). It is essential for the degradation of carbohydrates via glycolysis. The sequence is that of Enolase from Burkholderia orbicola (strain MC0-3).